Here is a 215-residue protein sequence, read N- to C-terminus: Thymidylate kinase (215 aa).

13 to 20 (GLEGAGKS) contacts ATP.

The protein belongs to the thymidylate kinase family.

It catalyses the reaction dTMP + ATP = dTDP + ADP. Functionally, phosphorylation of dTMP to form dTDP in both de novo and salvage pathways of dTTP synthesis. The sequence is that of Thymidylate kinase from Shewanella frigidimarina (strain NCIMB 400).